The chain runs to 545 residues: Chaperonin GroEL (545 aa).

Residues threonine 30–proline 33, lysine 51, aspartate 87–threonine 91, glycine 415, asparagine 479–alanine 481, and aspartate 495 each bind ATP. The segment at lysine 526 to methionine 545 is disordered.

It belongs to the chaperonin (HSP60) family. In terms of assembly, forms a cylinder of 14 subunits composed of two heptameric rings stacked back-to-back. Interacts with the co-chaperonin GroES.

The protein localises to the cytoplasm. The enzyme catalyses ATP + H2O + a folded polypeptide = ADP + phosphate + an unfolded polypeptide.. In terms of biological role, together with its co-chaperonin GroES, plays an essential role in assisting protein folding. The GroEL-GroES system forms a nano-cage that allows encapsulation of the non-native substrate proteins and provides a physical environment optimized to promote and accelerate protein folding. The polypeptide is Chaperonin GroEL (Paracidovorax citrulli (strain AAC00-1) (Acidovorax citrulli)).